Consider the following 432-residue polypeptide: Trigger factor (432 aa).

Residues Gly161–Pro246 form the PPIase FKBP-type domain.

It belongs to the FKBP-type PPIase family. Tig subfamily.

It localises to the cytoplasm. It carries out the reaction [protein]-peptidylproline (omega=180) = [protein]-peptidylproline (omega=0). Involved in protein export. Acts as a chaperone by maintaining the newly synthesized protein in an open conformation. Functions as a peptidyl-prolyl cis-trans isomerase. The polypeptide is Trigger factor (Aliivibrio fischeri (strain ATCC 700601 / ES114) (Vibrio fischeri)).